We begin with the raw amino-acid sequence, 333 residues long: N-acetyl-gamma-glutamyl-phosphate reductase (333 aa).

C145 is an active-site residue.

The protein belongs to the NAGSA dehydrogenase family. Type 1 subfamily.

The protein resides in the cytoplasm. The catalysed reaction is N-acetyl-L-glutamate 5-semialdehyde + phosphate + NADP(+) = N-acetyl-L-glutamyl 5-phosphate + NADPH + H(+). It participates in amino-acid biosynthesis; L-arginine biosynthesis; N(2)-acetyl-L-ornithine from L-glutamate: step 3/4. Its function is as follows. Catalyzes the NADPH-dependent reduction of N-acetyl-5-glutamyl phosphate to yield N-acetyl-L-glutamate 5-semialdehyde. This is N-acetyl-gamma-glutamyl-phosphate reductase from Salinispora arenicola (strain CNS-205).